Reading from the N-terminus, the 138-residue chain is Regulator of ribonuclease activity B (138 aa).

The disordered stretch occupies residues 114–138; sequence YFEDPNGEDGDDEDFVDEDDDGVRH. Over residues 118–138 the composition is skewed to acidic residues; that stretch reads PNGEDGDDEDFVDEDDDGVRH.

The protein belongs to the RraB family. As to quaternary structure, interacts with the C-terminal region of Rne.

Its subcellular location is the cytoplasm. Globally modulates RNA abundance by binding to RNase E (Rne) and regulating its endonucleolytic activity. Can modulate Rne action in a substrate-dependent manner by altering the composition of the degradosome. The sequence is that of Regulator of ribonuclease activity B from Escherichia coli (strain K12).